The following is a 658-amino-acid chain: Probable replication factor A 73 kDa subunit (658 aa).

Disordered stretches follow at residues 134 to 155 (PEVK…RPNI) and 169 to 222 (SEFQ…TERG). The OB DNA-binding region spans 236–326 (FRIHGMVSRK…TLRNDSVVEA (91 aa)). The C4-type zinc-finger motif lies at 518-539 (CASEGCQKKVIESDGEYRCEKC).

This sequence belongs to the replication factor A protein 1 family. Component of the heterotrimeric canonical replication protein A complex (RPA).

It is found in the nucleus. Functionally, as part of the heterotrimeric replication protein A complex (RPA/RP-A), binds and stabilizes single-stranded DNA intermediates, that form during DNA replication or upon DNA stress. It prevents their reannealing and in parallel, recruits and activates different proteins and complexes involved in DNA metabolism. Thereby, it plays an essential role both in DNA replication and the cellular response to DNA damage. In Caenorhabditis briggsae, this protein is Probable replication factor A 73 kDa subunit.